The chain runs to 323 residues: Glyoxylate/hydroxypyruvate reductase B (323 aa).

Active-site residues include Arg237 and Glu266. His285 (proton donor) is an active-site residue.

The protein belongs to the D-isomer specific 2-hydroxyacid dehydrogenase family. GhrB subfamily. As to quaternary structure, homodimer.

It localises to the cytoplasm. The enzyme catalyses glycolate + NADP(+) = glyoxylate + NADPH + H(+). It catalyses the reaction (R)-glycerate + NAD(+) = 3-hydroxypyruvate + NADH + H(+). It carries out the reaction (R)-glycerate + NADP(+) = 3-hydroxypyruvate + NADPH + H(+). In terms of biological role, catalyzes the NADPH-dependent reduction of glyoxylate and hydroxypyruvate into glycolate and glycerate, respectively. This Klebsiella pneumoniae subsp. pneumoniae (strain ATCC 700721 / MGH 78578) protein is Glyoxylate/hydroxypyruvate reductase B.